The chain runs to 470 residues: MNTISIVKILNEFDQLQNTEITLYGWIRTRRHSKTKITFLNLYDGSCLESLQIVVKNNLHNYETDILKLTTGCSIIAKGYITNSLGTKQRIELIATYIQVLGWIDNPSTYPITTKKHSMEYLRNVAHLRPRTHIFGAISRIRHVLFQSIHNLMNTKGFIWVPTPIITASDTEGNSKMFYVSELLNNSKKSQNICNSHQKIPELFFGKEAFLTVSGQLNVESYACALTKVYTFGPTFRAEHSNTNRHLAEFWMLEPEMAFTDLNIIIKIADSLLKDIVQTILEQCINDIEYCASHIKEYNLIKRLENFLHSKIIHIEYTDAIKLLSSCDKTFNNTIYWGMDLFSEHEKYLSEEYFQSPIVIKNHPKNIKAFYMRLNDDNKTVSSMDILVPGIGEIIGGSQREERLSILDKRLLENNLKTECYWWYRDLRRYGTVPHSGFGLGFERLIIYITGLTNIRDAVPFPRTINSINF.

The protein belongs to the class-II aminoacyl-tRNA synthetase family. As to quaternary structure, homodimer.

The protein localises to the cytoplasm. The enzyme catalyses tRNA(Asn) + L-asparagine + ATP = L-asparaginyl-tRNA(Asn) + AMP + diphosphate + H(+). In Blochmanniella floridana, this protein is Asparagine--tRNA ligase.